The primary structure comprises 239 residues: tRNA (guanine-N(1)-)-methyltransferase (239 aa).

S-adenosyl-L-methionine-binding positions include G112 and 131 to 136 (LGDFIL).

It belongs to the RNA methyltransferase TrmD family. Homodimer.

It localises to the cytoplasm. The catalysed reaction is guanosine(37) in tRNA + S-adenosyl-L-methionine = N(1)-methylguanosine(37) in tRNA + S-adenosyl-L-homocysteine + H(+). Specifically methylates guanosine-37 in various tRNAs. The sequence is that of tRNA (guanine-N(1)-)-methyltransferase from Clostridium tetani (strain Massachusetts / E88).